The sequence spans 288 residues: Nucleotide-binding protein Tola_2941 (288 aa).

An ATP-binding site is contributed by 8-15; it reads GRSGSGKT. 56–59 lines the GTP pocket; the sequence is DVRN.

Belongs to the RapZ-like family.

Displays ATPase and GTPase activities. The polypeptide is Nucleotide-binding protein Tola_2941 (Tolumonas auensis (strain DSM 9187 / NBRC 110442 / TA 4)).